Consider the following 181-residue polypeptide: Protein Syd (181 aa).

It belongs to the Syd family.

The protein resides in the cell inner membrane. Its function is as follows. Interacts with the SecY protein in vivo. May bind preferentially to an uncomplexed state of SecY, thus functioning either as a chelating agent for excess SecY in the cell or as a regulatory factor that negatively controls the translocase function. In Escherichia fergusonii (strain ATCC 35469 / DSM 13698 / CCUG 18766 / IAM 14443 / JCM 21226 / LMG 7866 / NBRC 102419 / NCTC 12128 / CDC 0568-73), this protein is Protein Syd.